Here is a 282-residue protein sequence, read N- to C-terminus: MIICKKISAVRDIVKEQRGQGRSIALVPTMGYLHEGHLTLVEEARKSGAFVVMSIFVNPLQFGPNEDFARYPRDLERDAKKAEGAGVDLIFNPEVEEMYPAKNLTHVEVDELGDSLCGASRPGHFRGVTTVVSKLFHIVQPDRAYFGQKDYQQYLIICQMVKDLNFPIEVIGVPIVREEDGLALSSRNIYLSPEQRAEALVLQRSLGEAENWFRQGERSALSIEERIKELIRNESSGEIDYVEIRSAENLHRVEQIEGKIFIALAVRFGSTRLIDNKVLEGM.

Residue 30-37 participates in ATP binding; it reads MGYLHEGH. The Proton donor role is filled by His-37. Gln-61 lines the (R)-pantoate pocket. A beta-alanine-binding site is contributed by Gln-61. An ATP-binding site is contributed by 147–150; the sequence is GQKD. (R)-pantoate is bound at residue Gln-153. Residues Val-176 and 184-187 contribute to the ATP site; that span reads LSSR.

Belongs to the pantothenate synthetase family. As to quaternary structure, homodimer.

It is found in the cytoplasm. It carries out the reaction (R)-pantoate + beta-alanine + ATP = (R)-pantothenate + AMP + diphosphate + H(+). Its pathway is cofactor biosynthesis; (R)-pantothenate biosynthesis; (R)-pantothenate from (R)-pantoate and beta-alanine: step 1/1. Its function is as follows. Catalyzes the condensation of pantoate with beta-alanine in an ATP-dependent reaction via a pantoyl-adenylate intermediate. The sequence is that of Pantothenate synthetase from Desulfitobacterium hafniense (strain DSM 10664 / DCB-2).